The primary structure comprises 198 residues: Guanylate kinase (198 aa).

The 183-residue stretch at 4–186 folds into the Guanylate kinase-like domain; that stretch reads PRPVVLSGPS…AYATLKQALS (183 aa). Position 14-19 (14-19) interacts with ATP; the sequence is GAGKST. 37–51 serves as a coordination point for substrate; it reads SHTTRNPRPGEEDGK. Residues Arg-44, Arg-137, and Arg-148 contribute to the active site. An ATP-binding site is contributed by 171 to 172; the sequence is ND.

This sequence belongs to the guanylate kinase family. Monomer. Interacts with RD3. Widely expressed. In retina is expressed in inner segment, outer nuclear layer, outer plexiform layer, inner plexiform layer, and ganglion cell layer (at protein level).

The protein localises to the photoreceptor inner segment. The protein resides in the cytoplasm. It localises to the cytosol. It is found in the mitochondrion. It carries out the reaction GMP + ATP = GDP + ADP. In terms of biological role, catalyzes the phosphorylation of GMP to GDP. Essential enzyme for recycling GMP and indirectly, cyclic GMP (cGMP). Involved in the cGMP metabolism in photoreceptors. This chain is Guanylate kinase, found in Mus musculus (Mouse).